A 957-amino-acid chain; its full sequence is Plasma membrane ATPase 1 (957 aa).

The Cytoplasmic segment spans residues 1-66; the sequence is MGEEKPEVLD…EKKDSKLLKF (66 aa). Residues 67–86 traverse the membrane as a helical segment; the sequence is LGFMWNPLSWVMEAAAIMAI. Topologically, residues 87-98 are extracellular; the sequence is ALANGGGKPPDW. The helical transmembrane segment at 99 to 119 threads the bilayer; the sequence is QDFVGIITLLIINSTISFIEE. The Cytoplasmic segment spans residues 120–248; it reads NNAGNAAAAL…GHFQKVLTAI (129 aa). Residues 249 to 269 traverse the membrane as a helical segment; the sequence is GNFCICSIAVGMIIEIIVMYP. Residues 270–279 lie on the Extracellular side of the membrane; it reads IQHRAYRPGI. The chain crosses the membrane as a helical span at residues 280 to 301; sequence DNLLVLLIGGIPIAMPTVLSVT. Residues 302 to 648 lie on the Cytoplasmic side of the membrane; the sequence is MAIGSHRLAQ…TSRAIFQRMK (347 aa). D334 functions as the 4-aspartylphosphate intermediate in the catalytic mechanism. Residues D593 and D597 each coordinate Mg(2+). Residues 649–670 form a helical membrane-spanning segment; that stretch reads NYTIYAVSITIRIVLGFMLLAL. The Extracellular segment spans residues 671–675; sequence IWKFD. Residues 676–698 traverse the membrane as a helical segment; it reads FPPFMVLIIAILNDGTIMTISKD. The Cytoplasmic portion of the chain corresponds to 699 to 714; that stretch reads RVKPSPLPDSWKLAEI. Residues 715-735 form a helical membrane-spanning segment; sequence FTTGIVLGGYLAMMTVIFFWA. The Extracellular portion of the chain corresponds to 736–760; it reads AYKTNFFPHVFGVSTLEKTATDDFR. Residues 761 to 781 traverse the membrane as a helical segment; the sequence is KLASAIYLQVSIISQALIFVT. Topologically, residues 782-793 are cytoplasmic; the sequence is RSRSWSFVERPG. A helical membrane pass occupies residues 794–814; it reads FLLVIAFVIAQLVATLIAVYA. Over 815-823 the chain is Extracellular; sequence NWSFAAIEG. Residues 824–844 traverse the membrane as a helical segment; sequence IGWGWAGVIWIYNLVFYIPLD. The Cytoplasmic portion of the chain corresponds to 845-957; it reads IIKFFIRYAL…IETIQQAYTV (113 aa).

The protein belongs to the cation transport ATPase (P-type) (TC 3.A.3) family. Type IIIA subfamily. Expressed in roots, stems, leaves from both vegetative and flowering plants, and flowers at early and late stages of development with highest expression levels found in flowers and stem.

The protein localises to the cell membrane. It carries out the reaction ATP + H2O + H(+)(in) = ADP + phosphate + 2 H(+)(out). In terms of biological role, the plasma membrane ATPase of plants and fungi is a hydrogen ion pump. The proton gradient it generates drives the active transport of nutrients by H(+)-symport. The resulting external acidification and/or internal alkinization may mediate growth responses. In Nicotiana plumbaginifolia (Leadwort-leaved tobacco), this protein is Plasma membrane ATPase 1 (PMA1).